The chain runs to 255 residues: MERSSSYGVEKLQKRCYHEWMSLQTKHIDDLKEALMCQRNNDDKLEDLVGKIVNDYHTYAGKRSELSYRCCAHYFAPSWNTPIENSMLWMGGCRPSSFIRLIYALCGSQAETQLSQYLLKIDDDFDINHGGFMSDLTATQLGKLNDLHLEVIKKEDKITKTSANFQDDVADLPIADVVHADVAVEDALDKHEEGMAVLLAEADKLRFETLRKIVDVVTPLQAVEFLLAGKRLQLSLHDRGRVRADVCGGVGGAAV.

In terms of domain architecture, DOG1 spans 10-246; it reads EKLQKRCYHE…HDRGRVRADV (237 aa).

This chain is Protein DOG1-like 2, found in Arabidopsis thaliana (Mouse-ear cress).